We begin with the raw amino-acid sequence, 350 residues long: Ion-translocating oxidoreductase complex subunit D (350 aa).

4 helical membrane-spanning segments follow: residues Val20 to Gly40, Gly42 to Leu62, Leu89 to Ala109, and Pro120 to Thr140. Thr178 carries the FMN phosphoryl threonine modification. The next 5 membrane-spanning stretches (helical) occupy residues Leu204–Ile224, Ile228–Phe248, Tyr255–Ala275, Ala282–Ile302, and Gly306–Ile326.

This sequence belongs to the NqrB/RnfD family. In terms of assembly, the complex is composed of six subunits: RnfA, RnfB, RnfC, RnfD, RnfE and RnfG. FMN is required as a cofactor.

Its subcellular location is the cell inner membrane. In terms of biological role, part of a membrane-bound complex that couples electron transfer with translocation of ions across the membrane. This Marinobacter nauticus (strain ATCC 700491 / DSM 11845 / VT8) (Marinobacter aquaeolei) protein is Ion-translocating oxidoreductase complex subunit D.